The sequence spans 35 residues: Photosystem II reaction center protein T (35 aa).

The helical transmembrane segment at 3–23 (ALVYTFLLVSTLGIIFFAIFF) threads the bilayer.

It belongs to the PsbT family. PSII is composed of 1 copy each of membrane proteins PsbA, PsbB, PsbC, PsbD, PsbE, PsbF, PsbH, PsbI, PsbJ, PsbK, PsbL, PsbM, PsbT, PsbY, PsbZ, Psb30/Ycf12, at least 3 peripheral proteins of the oxygen-evolving complex and a large number of cofactors. It forms dimeric complexes.

It is found in the plastid. The protein localises to the chloroplast thylakoid membrane. Its function is as follows. Found at the monomer-monomer interface of the photosystem II (PS II) dimer, plays a role in assembly and dimerization of PSII. PSII is a light-driven water plastoquinone oxidoreductase, using light energy to abstract electrons from H(2)O, generating a proton gradient subsequently used for ATP formation. The protein is Photosystem II reaction center protein T of Suaeda aralocaspica (Seablite).